Reading from the N-terminus, the 418-residue chain is Pigment epithelium-derived factor (418 aa).

The first 19 residues, 1–19, serve as a signal peptide directing secretion; that stretch reads MQALVLLLCIGALLGHSSC. Residue Q20 is modified to Pyrrolidone carboxylic acid. Positions 20 to 39 are disordered; that stretch reads QNPASPPEEGSPDPDSTGAL. S24 and S114 each carry phosphoserine; by CK2. The residue at position 227 (S227) is a Phosphoserine; by PKA. N285 is a glycosylation site (N-linked (GlcNAc...) (complex) asparagine). Residues 371–383 form an O-glycosylated at one site region; it reads TTPSPGLQPAHLT.

This sequence belongs to the serpin family. In terms of assembly, interacts with PNPLA2; this interaction stimulates the phospholipase A2 activity of PNPLA2. In terms of processing, the N-terminus is blocked. Extracellular phosphorylation enhances antiangiogenic activity. Post-translationally, N- and O-glycosylated. O-glycosylated with a core 1 or possibly core 8 glycan. Retinal pigment epithelial cells and blood plasma.

Its subcellular location is the secreted. It is found in the melanosome. Its function is as follows. Neurotrophic protein; induces extensive neuronal differentiation in retinoblastoma cells. Potent inhibitor of angiogenesis. As it does not undergo the S (stressed) to R (relaxed) conformational transition characteristic of active serpins, it exhibits no serine protease inhibitory activity. In Homo sapiens (Human), this protein is Pigment epithelium-derived factor (SERPINF1).